A 452-amino-acid polypeptide reads, in one-letter code: Coproporphyrinogen III oxidase (452 aa).

FAD contacts are provided by residues glycine 10–glycine 15, glutamate 36–proline 37, glycine 58–alanine 61, valine 242, tryptophan 390, and isoleucine 426–valine 428.

This sequence belongs to the protoporphyrinogen/coproporphyrinogen oxidase family. Coproporphyrinogen III oxidase subfamily. It depends on FAD as a cofactor.

Its subcellular location is the cytoplasm. The enzyme catalyses coproporphyrinogen III + 3 O2 = coproporphyrin III + 3 H2O2. It functions in the pathway porphyrin-containing compound metabolism; protoheme biosynthesis. Involved in coproporphyrin-dependent heme b biosynthesis. Catalyzes the oxidation of coproporphyrinogen III to coproporphyrin III. The sequence is that of Coproporphyrinogen III oxidase from Mycobacterium bovis (strain ATCC BAA-935 / AF2122/97).